The sequence spans 21 residues: Misgurin (21 aa).

The disordered stretch occupies residues 1–21 (RQRVEELSKFSKKGAAARRRK). Residues 10–21 (FSKKGAAARRRK) are compositionally biased toward basic residues.

It is found in the secreted. Functionally, strong antimicrobial activity against several Gram-positive and Gram-negative bacteria and fungi. The sequence is that of Misgurin from Misgurnus anguillicaudatus (Oriental weatherloach).